Consider the following 662-residue polypeptide: MLFNFYNKTSAACKSLPAKALSNVRYFQTSPISRKMPLPPVLESRRPKESPEFDYSTLSNYKSFKVKHSQLDVSVDFKKKTISGSVSYEIEKVKKDENTIKLDTSYLKISKVKVDDEDDVKFKLLERKHPLGAQLIVSPSSLPEIFHLCLQFSTTADCTALQWLDEHQTSGKPYVFSQLEAIHARSLFTCFDTPSVKSTYLANIKSELPVVFSGIQTGYDDSTKVYSFKQEVPIPAYLIGIASGDLASADIGPRSKVYVEPYRLKDAQWEFDGDVEKFITTAEDIIFKYEWGTYDILVNPNSYPYGGMESPNMTFATPTLIAHDKSNIDVIAHELAHSWSGNLVTNCSWDHFWLNEGWTVYLERRITGAIHGEATRHFSSLIGWNDLEGSISAMQNPERFSCLVQNLKDGTDPDNAFSTVPYEKGSNLLFYLENLLGGKEVFDPFIKHYFTKFARQSLDTWQFLDALFEFFHDKREILESVDWQTWLFTPGMPPKPKLITDLADDVYALANKWIASAQKFTEREQFEKEFSIKDISEFSSNQIVLLLDTLVQGGMPEKDTFKWSNYPEASEIFTDIYEDKISKSQNAEVIFRNYRLQVKSHITSSYPELAEWLGTVGRMKFVRPGYRLLNEVDRELAIKTFHRFRDSYHPICKSLVKQDLGI.

A peptide is bound by residues Q178–E180 and P304–E309. H333 lines the Zn(2+) pocket. E334 functions as the Proton acceptor in the catalytic mechanism. H337 and E356 together coordinate Zn(2+). The active-site Proton donor is the Y422.

The protein belongs to the peptidase M1 family. Zn(2+) serves as cofactor.

The protein localises to the cytoplasm. It is found in the nucleus. It carries out the reaction an epoxide + H2O = an ethanediol. In terms of biological role, aminopeptidase that preferentially cleaves di- and tripeptides. Also has low epoxide hydrolase activity (in vitro). Can hydrolyze the epoxide leukotriene LTA(4) but it forms preferentially 5,6-dihydroxy-7,9,11,14-eicosatetraenoic acid rather than the cytokine leukotriene B(4) as the product compared to the homologous mammalian enzyme (in vitro). This Kluyveromyces lactis (strain ATCC 8585 / CBS 2359 / DSM 70799 / NBRC 1267 / NRRL Y-1140 / WM37) (Yeast) protein is Leucine aminopeptidase 2.